Reading from the N-terminus, the 235-residue chain is Segregation and condensation protein A (235 aa).

The protein belongs to the ScpA family. Component of a cohesin-like complex composed of ScpA, ScpB and the Smc homodimer, in which ScpA and ScpB bind to the head domain of Smc. The presence of the three proteins is required for the association of the complex with DNA.

The protein resides in the cytoplasm. Functionally, participates in chromosomal partition during cell division. May act via the formation of a condensin-like complex containing Smc and ScpB that pull DNA away from mid-cell into both cell halves. The chain is Segregation and condensation protein A from Streptococcus mutans serotype c (strain ATCC 700610 / UA159).